Here is a 332-residue protein sequence, read N- to C-terminus: MATLKDQLIHNLLKEEQTPQNKITVVGVGAVGMACAISILMKDLADELALVDVIEDKLKGEMMDLQHGSLFLRTPKIVSGKDYNVTANSKLVIITAGARQQEGESRLNLVQRNVNIFKFIIPNVVKYSPNCKLLIVSNPVDILTYVAWKISGFPKNRVIGSGCNLDSARFRYLMGERLGVHPLSCHGWVLGEHGDSSVPVWSGMNVAGVSLKTLHPDLGTDKDKEQWKEVHKQVVESAYEVIKLKGYTSWAIGLSVADLAESIMKNLRRVHPVSTMIKGLYGIKDDVFLSVPCILGQNGISDLVKVTLTSEEEARLKKSADTLWGIQKELQF.

Ala2 is modified (N-acetylalanine). At Lys5 the chain carries N6-acetyllysine; alternate. Lys5 carries the post-translational modification N6-succinyllysine; alternate. Position 14 is an N6-acetyllysine (Lys14). Residue Thr18 is modified to Phosphothreonine. 29–57 is an NAD(+) binding site; sequence GAVGMACAISILMKDLADELALVDVIEDK. Lys57 bears the N6-acetyllysine; alternate mark. Lys57 is covalently cross-linked (Glycyl lysine isopeptide (Lys-Gly) (interchain with G-Cter in SUMO2); alternate). Residue Lys81 is modified to N6-acetyllysine. Arg99 lines the NAD(+) pocket. Arg106 contacts substrate. An N6-acetyllysine; alternate modification is found at Lys118. At Lys118 the chain carries N6-succinyllysine; alternate. Lys126 is modified (N6-acetyllysine). 2 residues coordinate substrate: Asn138 and Arg169. His193 functions as the Proton acceptor in the catalytic mechanism. N6-acetyllysine occurs at positions 224 and 232. Residue Tyr239 is modified to Phosphotyrosine. An N6-acetyllysine modification is found at Lys243. A substrate-binding site is contributed by Thr248. Phosphothreonine is present on Thr309. At Ser310 the chain carries Phosphoserine. Position 318 is an N6-acetyllysine; alternate (Lys318). Lys318 is modified (N6-succinyllysine; alternate). Phosphothreonine is present on Thr322.

This sequence belongs to the LDH/MDH superfamily. LDH family. Homotetramer. Interacts with PTEN upstream reading frame protein MP31. In terms of processing, ISGylated.

The protein resides in the cytoplasm. The catalysed reaction is (S)-lactate + NAD(+) = pyruvate + NADH + H(+). It functions in the pathway fermentation; pyruvate fermentation to lactate; (S)-lactate from pyruvate: step 1/1. In terms of biological role, interconverts simultaneously and stereospecifically pyruvate and lactate with concomitant interconversion of NADH and NAD(+). This Pan troglodytes (Chimpanzee) protein is L-lactate dehydrogenase A chain (LDHA).